Here is a 642-residue protein sequence, read N- to C-terminus: Threonine--tRNA ligase (642 aa).

A TGS domain is found at 1 to 61; sequence MPVITLPDGS…HEDASLSIIT (61 aa). A catalytic region spans residues 243-534; that stretch reads DHRKIGKQLD…LIEEYAGRFP (292 aa). Cys334, His385, and His511 together coordinate Zn(2+).

It belongs to the class-II aminoacyl-tRNA synthetase family. In terms of assembly, homodimer. It depends on Zn(2+) as a cofactor.

Its subcellular location is the cytoplasm. It carries out the reaction tRNA(Thr) + L-threonine + ATP = L-threonyl-tRNA(Thr) + AMP + diphosphate + H(+). Its function is as follows. Catalyzes the attachment of threonine to tRNA(Thr) in a two-step reaction: L-threonine is first activated by ATP to form Thr-AMP and then transferred to the acceptor end of tRNA(Thr). Also edits incorrectly charged L-seryl-tRNA(Thr). This Shewanella amazonensis (strain ATCC BAA-1098 / SB2B) protein is Threonine--tRNA ligase.